The following is a 163-amino-acid chain: Epithelial membrane protein 3 (163 aa).

A helical transmembrane segment spans residues 4 to 24; sequence LLLVVSALHILILILLFVATL. Residues asparagine 49 and asparagine 56 are each glycosylated (N-linked (GlcNAc...) asparagine). A run of 3 helical transmembrane segments spans residues 66–86, 100–120, and 139–159; these read VQVL…LFMF, TGFC…IYAI, and FALA…YIHL.

The protein belongs to the PMP-22/EMP/MP20 family.

It is found in the membrane. Its function is as follows. Probably involved in cell proliferation and cell-cell interactions. This is Epithelial membrane protein 3 (EMP3) from Bos taurus (Bovine).